The chain runs to 660 residues: Protein SCARECROW 2 (660 aa).

Disordered regions lie at residues 1–33 and 190–286; these read MGSS…ITSL and SDPA…KQRD. The segment covering 192–229 has biased composition (pro residues); the sequence is PAPPPPPPSHPALLPPDATAPPPPPTSVAALPPPPPAQ. Low complexity predominate over residues 259–272; that stretch reads AAAAAAAAAAAAAA. A coiled-coil region spans residues 262–289; the sequence is AAAAAAAAAAAAKERKEEQRRKQRDEEG. Basic and acidic residues predominate over residues 273–286; it reads AKERKEEQRRKQRD. Positions 283 to 653 constitute a GRAS domain; it reads KQRDEEGLHL…LCLLTASAWR (371 aa). The segment at 290–354 is leucine repeat I (LRI); sequence LHLLTLLLQC…VSSCLGLYAP (65 aa). The LxCxE motif motif lies at 297–301; sequence LQCAE. The segment at 373 to 438 is VHIID; that stretch reads FQVFNGISPF…GGPPRVRLTG (66 aa). The VHIID signature appears at 404–408; sequence VHIID. The interval 448–480 is leucine repeat II (LRII); that stretch reads ATGKRLSDFADTLGLPFEFCPVADKAGNLDPEK. A PFYRE region spans residues 489 to 576; it reads VAVHWLRHSL…QQLLSREIRN (88 aa). Positions 579 to 653 are SAW; it reads AVGGPARTGD…LCLLTASAWR (75 aa).

This sequence belongs to the GRAS family.

It is found in the cytoplasm. Its function is as follows. Probable transcription factor involved in asmmetric cell division in the cortex/endodermis progenitor cell and in the process of stomata and ligule formation in leaves. The protein is Protein SCARECROW 2 (SCR2) of Oryza sativa subsp. indica (Rice).